A 326-amino-acid polypeptide reads, in one-letter code: Adenosine receptor A1 (326 aa).

Residues 1–10 lie on the Extracellular side of the membrane; sequence MPPSISAFQA. A helical membrane pass occupies residues 11 to 33; sequence AYIGIEVLIALVSVPGNVLVIWA. Over 34–46 the chain is Cytoplasmic; it reads VKVNQALRDATFC. Residues 47–69 traverse the membrane as a helical segment; sequence FIVSLAVADVAVGALVIPLAILI. Topologically, residues 70–80 are extracellular; sequence NIGPRTYFHTC. Cys80 and Cys169 are oxidised to a cystine. Residues 81 to 102 traverse the membrane as a helical segment; sequence LKVACPVLILTQSSILALLAIA. Over 103 to 123 the chain is Cytoplasmic; the sequence is VDRYLRVKIPLRYKTVVTPRR. Residues 124–146 traverse the membrane as a helical segment; sequence AVVAITGCWILSFVVGLTPMFGW. Topologically, residues 147–176 are extracellular; the sequence is NNLSAVERDWLANGSVGEPVIECQFEKVIS. N-linked (GlcNAc...) asparagine glycans are attached at residues Asn148 and Asn159. Residues 177-201 form a helical membrane-spanning segment; it reads MEYMVYFNFFVWVLPPLLLMVLIYM. The Cytoplasmic portion of the chain corresponds to 202–235; it reads EVFYLIRKQLNKKVSASSGDPQKYYGKELKIAKS. Residues 236–259 traverse the membrane as a helical segment; it reads LALILFLFALSWLPLHILNCITLF. Residues 260 to 267 lie on the Extracellular side of the membrane; sequence CPSCHMPR. Residues 268–292 form a helical membrane-spanning segment; that stretch reads ILIYIAIFLSHGNSAMNPIVYAFRI. Residues 293–326 are Cytoplasmic-facing; that stretch reads QKFRVTFLKIWNDHFRCQPAPPVDEDAPAERPDD. Cys309 carries the S-palmitoyl cysteine lipid modification.

It belongs to the G-protein coupled receptor 1 family.

The protein localises to the cell membrane. Functionally, receptor for adenosine. The activity of this receptor is mediated by G proteins which inhibit adenylyl cyclase. This chain is Adenosine receptor A1 (ADORA1), found in Bos taurus (Bovine).